The sequence spans 368 residues: MNIINKKVIVGMSGGVDSSVSALLLLQQGYTVEGLFMKNWEEDDHEQYCTVAKDLADAQAVCNQLGIILHKVNFAAEYWDNVFEYFLAEYQVGRTPNPDILCNKNIKFKVFLDFATQNLGADYIATGHYVIRKDINGKSRLLRGLDNQKDQSYFLYTIGYQQMARCFFPLGKLNKLRVREIAAKQGLVTASKKDSTGICFIGKRKLSDLLSRYISAKPGAIITVDNEYIGYHQGLMYYTLGQRKKLGIGGTKNGSQDPWYVVDKDINHNLLIIAQGHNHPRLMSNGLIASKLYWVDRTTLSTPLRCTVKTRYRQSDIGCLIKPIANNQLQVDFDYPVAAVTPGQSAVFYLAEQCIGGGTIEIRKPLGS.

Residues 11–18 and M37 each bind ATP; that span reads GMSGGVDS. Residues 97 to 99 are interaction with target base in tRNA; that stretch reads NPD. The Nucleophile role is filled by C102. C102 and C199 are disulfide-bonded. G127 is an ATP binding site. The interval 149-151 is interaction with tRNA; that stretch reads KDQ. C199 (cysteine persulfide intermediate) is an active-site residue. The interaction with tRNA stretch occupies residues 311 to 312; sequence RY.

Belongs to the MnmA/TRMU family.

It is found in the cytoplasm. It carries out the reaction S-sulfanyl-L-cysteinyl-[protein] + uridine(34) in tRNA + AH2 + ATP = 2-thiouridine(34) in tRNA + L-cysteinyl-[protein] + A + AMP + diphosphate + H(+). In terms of biological role, catalyzes the 2-thiolation of uridine at the wobble position (U34) of tRNA, leading to the formation of s(2)U34. The chain is tRNA-specific 2-thiouridylase MnmA from Baumannia cicadellinicola subsp. Homalodisca coagulata.